The chain runs to 193 residues: Peptidyl-tRNA hydrolase (193 aa).

Y14 contributes to the tRNA binding site. H19 serves as the catalytic Proton acceptor. TRNA contacts are provided by F64, N66, and N112.

The protein belongs to the PTH family. Monomer.

It localises to the cytoplasm. It catalyses the reaction an N-acyl-L-alpha-aminoacyl-tRNA + H2O = an N-acyl-L-amino acid + a tRNA + H(+). Its function is as follows. Hydrolyzes ribosome-free peptidyl-tRNAs (with 1 or more amino acids incorporated), which drop off the ribosome during protein synthesis, or as a result of ribosome stalling. Catalyzes the release of premature peptidyl moieties from peptidyl-tRNA molecules trapped in stalled 50S ribosomal subunits, and thus maintains levels of free tRNAs and 50S ribosomes. The sequence is that of Peptidyl-tRNA hydrolase from Bartonella quintana (strain Toulouse) (Rochalimaea quintana).